A 75-amino-acid polypeptide reads, in one-letter code: Salivary glue protein Sgs-8 (75 aa).

A signal peptide spans 1–24 (MKLLVVAVIACIMLIGFADPASGC).

The protein is Salivary glue protein Sgs-8 (Sgs8) of Drosophila melanogaster (Fruit fly).